Here is a 153-residue protein sequence, read N- to C-terminus: Small ribosomal subunit protein uS9 (153 aa).

Residues 1 to 19 (MTAPADEAPAVEDAPVAED) show a composition bias toward low complexity. Disordered regions lie at residues 1 to 23 (MTAP…IAPV) and 121 to 153 (LKKA…YSKR). Over residues 129-138 (RDSREKERKK) the composition is skewed to basic and acidic residues. Over residues 139–153 (YGLKKARKAPQYSKR) the composition is skewed to basic residues.

Belongs to the universal ribosomal protein uS9 family.

In Saccharopolyspora erythraea (strain ATCC 11635 / DSM 40517 / JCM 4748 / NBRC 13426 / NCIMB 8594 / NRRL 2338), this protein is Small ribosomal subunit protein uS9.